Consider the following 493-residue polypeptide: Galactose-1-phosphate uridylyltransferase (493 aa).

The protein belongs to the galactose-1-phosphate uridylyltransferase type 2 family.

It localises to the cytoplasm. The catalysed reaction is alpha-D-galactose 1-phosphate + UDP-alpha-D-glucose = alpha-D-glucose 1-phosphate + UDP-alpha-D-galactose. The protein operates within carbohydrate metabolism; galactose metabolism. The protein is Galactose-1-phosphate uridylyltransferase of Streptococcus pneumoniae (strain Hungary19A-6).